We begin with the raw amino-acid sequence, 290 residues long: 33 kDa chaperonin (290 aa).

Intrachain disulfides connect Cys235–Cys237 and Cys268–Cys271.

Belongs to the HSP33 family. Post-translationally, under oxidizing conditions two disulfide bonds are formed involving the reactive cysteines. Under reducing conditions zinc is bound to the reactive cysteines and the protein is inactive.

It is found in the cytoplasm. Functionally, redox regulated molecular chaperone. Protects both thermally unfolding and oxidatively damaged proteins from irreversible aggregation. Plays an important role in the bacterial defense system toward oxidative stress. The sequence is that of 33 kDa chaperonin from Streptococcus pyogenes serotype M1.